A 277-amino-acid polypeptide reads, in one-letter code: Knob-associated histidine-rich protein (277 aa).

2 disordered regions span residues 95–114 (DGSH…GYGY) and 162–277 (SSVN…KKKK). Composition is skewed to basic and acidic residues over residues 169–190 (KHGD…EGEK) and 211–220 (KDNEDAESVK). Residues 221–237 (SKKHKSHDCEKKKSKKH) are compositionally biased toward basic residues. Basic and acidic residues-rich tracts occupy residues 238–259 (KDNE…GEKH) and 268–277 (KTNEEKKKKK).

The protein localises to the secreted. In terms of biological role, KAHRP might mimick human histidine-rich glycoproteins to anchor host thrombospondin or a parasite analog in a binding complex with the endothelial cell receptor. The chain is Knob-associated histidine-rich protein from Plasmodium falciparum (isolate CDC / Honduras).